The following is a 170-amino-acid chain: Co-chaperone protein HscB homolog (170 aa).

Residues 5-79 (DHFSLFGLPT…RARYLCEQAG (75 aa)) form the J domain.

Belongs to the HscB family. In terms of assembly, interacts with HscA and stimulates its ATPase activity.

In terms of biological role, co-chaperone involved in the maturation of iron-sulfur cluster-containing proteins. Seems to help targeting proteins to be folded toward HscA. In Bordetella bronchiseptica (strain ATCC BAA-588 / NCTC 13252 / RB50) (Alcaligenes bronchisepticus), this protein is Co-chaperone protein HscB homolog.